The chain runs to 116 residues: HVA22-like protein e (116 aa).

3 consecutive transmembrane segments (helical) span residues 12 to 32 (HSLA…VIAI), 42 to 62 (QWLA…ILQS), and 63 to 83 (LLEW…WLVL).

It belongs to the DP1 family. As to expression, predominantly expressed in stem.

It is found in the membrane. The chain is HVA22-like protein e (HVA22E) from Arabidopsis thaliana (Mouse-ear cress).